A 544-amino-acid polypeptide reads, in one-letter code: Chaperonin GroEL 3 (544 aa).

ATP is bound by residues Thr30–Pro33, Lys51, Asp87–Thr91, Gly415, and Asp496.

This sequence belongs to the chaperonin (HSP60) family. As to quaternary structure, forms a cylinder of 14 subunits composed of two heptameric rings stacked back-to-back. Interacts with the co-chaperonin GroES.

It is found in the cytoplasm. The enzyme catalyses ATP + H2O + a folded polypeptide = ADP + phosphate + an unfolded polypeptide.. Together with its co-chaperonin GroES, plays an essential role in assisting protein folding. The GroEL-GroES system forms a nano-cage that allows encapsulation of the non-native substrate proteins and provides a physical environment optimized to promote and accelerate protein folding. The sequence is that of Chaperonin GroEL 3 from Rhizobium meliloti (strain 1021) (Ensifer meliloti).